Here is a 243-residue protein sequence, read N- to C-terminus: Orotidine 5'-phosphate decarboxylase (243 aa).

Substrate-binding positions include Asp19, Lys41, 69–78 (DLKFFDIPAT), Thr124, Arg185, Gln194, Gly214, and Arg215. Residue Lys71 is the Proton donor of the active site.

Belongs to the OMP decarboxylase family. Type 1 subfamily. In terms of assembly, homodimer.

The enzyme catalyses orotidine 5'-phosphate + H(+) = UMP + CO2. Its pathway is pyrimidine metabolism; UMP biosynthesis via de novo pathway; UMP from orotate: step 2/2. Functionally, catalyzes the decarboxylation of orotidine 5'-monophosphate (OMP) to uridine 5'-monophosphate (UMP). The chain is Orotidine 5'-phosphate decarboxylase from Xanthomonas axonopodis pv. citri (strain 306).